The sequence spans 148 residues: Meiosis inducing protein mei3 (148 aa).

Polar residues predominate over residues 1–20 (MSSQNTSNSRHPASSASALP). The interval 1–96 (MSSQNTSNSR…AQRIEHENKE (96 aa)) is disordered. A compositionally biased stretch (low complexity) spans 21–46 (NRTNTARRSTSPRTSTGSSSTNTNTK). Over residues 75-86 (PMKRTKRVRRTP) the composition is skewed to basic residues.

Acts as a critical meiotic inducer by binding non-covalently to protein kinase ran1/pat1 inhibiting its enzymatic activity. Inhibits ran1/pat1 by acting as a pseudosubstrate for ran1/pat1 instead of its natural substrate ste11. Inactivation of the ran1/pat1 protein kinase is both necessary and sufficient to divert a vegetative cell from mitotic division to meiotic differentiation. This Schizosaccharomyces pombe (strain 972 / ATCC 24843) (Fission yeast) protein is Meiosis inducing protein mei3.